Consider the following 189-residue polypeptide: Photosystem I assembly protein Ycf4 (189 aa).

Transmembrane regions (helical) follow at residues 25 to 45 and 62 to 82; these read SVYF…LAGL and LVFI…SLAG.

This sequence belongs to the Ycf4 family.

The protein localises to the cellular thylakoid membrane. Seems to be required for the assembly of the photosystem I complex. The chain is Photosystem I assembly protein Ycf4 from Synechococcus sp. (strain JA-3-3Ab) (Cyanobacteria bacterium Yellowstone A-Prime).